Consider the following 728-residue polypeptide: Phosphoribosylformylglycinamidine synthase subunit PurL (728 aa).

The active site involves His-42. ATP contacts are provided by Tyr-45 and Lys-84. Glu-86 contacts Mg(2+). Substrate contacts are provided by residues 87–90 (SHNH) and Arg-109. His-88 acts as the Proton acceptor in catalysis. Residue Asp-110 coordinates Mg(2+). Residue Gln-237 coordinates substrate. Residue Asp-265 coordinates Mg(2+). 309-311 (ESQ) contributes to the substrate binding site. ATP-binding residues include Asp-491 and Gly-528. Position 529 (Asn-529) interacts with Mg(2+). Ser-531 serves as a coordination point for substrate.

It belongs to the FGAMS family. In terms of assembly, monomer. Part of the FGAM synthase complex composed of 1 PurL, 1 PurQ and 2 PurS subunits.

The protein localises to the cytoplasm. It carries out the reaction N(2)-formyl-N(1)-(5-phospho-beta-D-ribosyl)glycinamide + L-glutamine + ATP + H2O = 2-formamido-N(1)-(5-O-phospho-beta-D-ribosyl)acetamidine + L-glutamate + ADP + phosphate + H(+). It participates in purine metabolism; IMP biosynthesis via de novo pathway; 5-amino-1-(5-phospho-D-ribosyl)imidazole from N(2)-formyl-N(1)-(5-phospho-D-ribosyl)glycinamide: step 1/2. Its function is as follows. Part of the phosphoribosylformylglycinamidine synthase complex involved in the purines biosynthetic pathway. Catalyzes the ATP-dependent conversion of formylglycinamide ribonucleotide (FGAR) and glutamine to yield formylglycinamidine ribonucleotide (FGAM) and glutamate. The FGAM synthase complex is composed of three subunits. PurQ produces an ammonia molecule by converting glutamine to glutamate. PurL transfers the ammonia molecule to FGAR to form FGAM in an ATP-dependent manner. PurS interacts with PurQ and PurL and is thought to assist in the transfer of the ammonia molecule from PurQ to PurL. This chain is Phosphoribosylformylglycinamidine synthase subunit PurL, found in Campylobacter jejuni (strain RM1221).